The following is a 630-amino-acid chain: Plastin-1 (630 aa).

M1 carries the N-acetylmethionine modification. 2 consecutive EF-hand domains span residues 11-46 (EELE…ASLP) and 51-86 (KVRE…LKSK). 10 residues coordinate Ca(2+): D24, D26, S28, Y30, E35, D64, N66, D68, K70, and E75. 2 actin-binding regions span residues 108-381 (TSSI…CLHK) and 382-626 (PDNN…GKGL). Calponin-homology (CH) domains are found at residues 122–238 (EEEK…KVGL), 266–377 (LSPE…NTYP), 396–505 (SKEE…RRYT), and 517–626 (KVTD…GKGL).

In terms of assembly, monomer. Phosphorylated. As to expression, in the inner ear, it is expressed in the organ of Corti. Abundant in the utricle (at protein level).

The protein resides in the cytoplasm. It is found in the cell projection. The protein localises to the stereocilium. In terms of biological role, actin-bundling protein. In the inner ear, it is required for stereocilia formation. Mediates liquid packing of actin filaments that is necessary for stereocilia to grow to their proper dimensions. In Mus musculus (Mouse), this protein is Plastin-1 (Pls1).